Consider the following 162-residue polypeptide: Phosphopantetheine adenylyltransferase (162 aa).

Ser-11 is a substrate binding site. Residues 11 to 12 and His-19 each bind ATP; that span reads SF. Residues Lys-43, Leu-75, and Arg-89 each coordinate substrate. ATP-binding positions include 90–92, Glu-100, and 125–131; these read GLR and FSYISSS.

It belongs to the bacterial CoaD family. Homohexamer. Mg(2+) serves as cofactor.

The protein resides in the cytoplasm. It catalyses the reaction (R)-4'-phosphopantetheine + ATP + H(+) = 3'-dephospho-CoA + diphosphate. It participates in cofactor biosynthesis; coenzyme A biosynthesis; CoA from (R)-pantothenate: step 4/5. In terms of biological role, reversibly transfers an adenylyl group from ATP to 4'-phosphopantetheine, yielding dephospho-CoA (dPCoA) and pyrophosphate. The chain is Phosphopantetheine adenylyltransferase from Petrotoga mobilis (strain DSM 10674 / SJ95).